Reading from the N-terminus, the 297-residue chain is Ubiquinol oxidase 2, mitochondrial (297 aa).

The tract at residues 17 to 43 is disordered; it reads VALNDKQHDKKVENGGAAASGGGDGGD. A helical membrane pass occupies residues 122–142; sequence AMMLETVAAVPGMVGGMLLHC. Residues Glu126, Glu165, and His168 each coordinate Fe cation. Residues 184–204 traverse the membrane as a helical segment; sequence ALVFAVQGVFINAYFVTYLLS. Fe cation is bound by residues Glu216, Glu267, and His270.

It belongs to the alternative oxidase family. As to quaternary structure, homodimer; disulfide-linked. Fe cation is required as a cofactor.

Its subcellular location is the mitochondrion inner membrane. It catalyses the reaction 2 a ubiquinol + O2 = 2 a ubiquinone + 2 H2O. Functionally, catalyzes the cyanide-resistant oxidation of ubiquinol and the reduction of molecular oxygen to water, but does not translocate protons and consequently is not linked to oxidative phosphorylation. May increase respiration when the cytochrome respiratory pathway is restricted, or in response to low temperatures. The chain is Ubiquinol oxidase 2, mitochondrial (AOX2) from Nicotiana tabacum (Common tobacco).